The chain runs to 345 residues: Probable galacturonosyltransferase-like 3 (345 aa).

The Cytoplasmic portion of the chain corresponds to 1 to 7 (MSSLRLR). The chain crosses the membrane as a helical; Signal-anchor for type II membrane protein span at residues 8–28 (LCLLLLLPITISCVTVTLTDL). At 29–345 (PAFREAPAFR…FRYSPLISDS (317 aa)) the chain is on the lumenal side. Asparagine 197 carries N-linked (GlcNAc...) asparagine glycosylation.

This sequence belongs to the glycosyltransferase 8 family.

It localises to the golgi apparatus membrane. It functions in the pathway glycan metabolism; pectin biosynthesis. May be involved in pectin and/or xylans biosynthesis in cell walls. The protein is Probable galacturonosyltransferase-like 3 (GATL3) of Arabidopsis thaliana (Mouse-ear cress).